Consider the following 220-residue polypeptide: Octanoyltransferase (220 aa).

A BPL/LPL catalytic domain is found at 36-212; that stretch reads ADSPDQFWLV…CLARQLGRRL (177 aa). Substrate contacts are provided by residues 75–82, 142–144, and 155–157; these read RGGQVTYH, SLG, and GVA. Residue Cys-173 is the Acyl-thioester intermediate of the active site.

Belongs to the LipB family.

Its subcellular location is the cytoplasm. The catalysed reaction is octanoyl-[ACP] + L-lysyl-[protein] = N(6)-octanoyl-L-lysyl-[protein] + holo-[ACP] + H(+). Its pathway is protein modification; protein lipoylation via endogenous pathway; protein N(6)-(lipoyl)lysine from octanoyl-[acyl-carrier-protein]: step 1/2. Its function is as follows. Catalyzes the transfer of endogenously produced octanoic acid from octanoyl-acyl-carrier-protein onto the lipoyl domains of lipoate-dependent enzymes. Lipoyl-ACP can also act as a substrate although octanoyl-ACP is likely to be the physiological substrate. This chain is Octanoyltransferase, found in Chromohalobacter salexigens (strain ATCC BAA-138 / DSM 3043 / CIP 106854 / NCIMB 13768 / 1H11).